The following is a 1177-amino-acid chain: Putative ATP-dependent RNA helicase TDRD12 (1177 aa).

The 63-residue stretch at 56–118 (TLEEGQVCVV…RVVVESFMQL (63 aa)) folds into the Tudor 1 domain. The Helicase ATP-binding domain maps to 447–635 (WPPIARGCDV…KEFMNDPYIV (189 aa)). Residue 460–467 (SHCESNPL) participates in ATP binding. Residues 574-577 (DEVE) carry the DEAH box motif. Residues 900 to 999 (IVDKHMDLYA…HTLPPQAVEF (100 aa)) form the Tudor 2 domain. The tract at residues 1098 to 1177 (EESLSQTPPR…VFKRWLSSNR (80 aa)) is disordered. Residues 1100–1115 (SLSQTPPRVTGTSPAQ) are compositionally biased toward polar residues.

Component of a mRNP complex containing PIWIL2, TDRD1 and piRNAs. Component of the PET complex, at least composed of EXD1, PIWIL2, TDRD12 and piRNAs.

The enzyme catalyses ATP + H2O = ADP + phosphate + H(+). Its function is as follows. Probable ATP-binding RNA helicase required during spermatogenesis to repress transposable elements and preventing their mobilization, which is essential for the germline integrity. Acts via the piRNA metabolic process, which mediates the repression of transposable elements during meiosis by forming complexes composed of piRNAs and Piwi proteins and governs the methylation and subsequent repression of transposons. Involved in the secondary piRNAs metabolic process. Acts via the PET complex, a multiprotein complex required during the secondary piRNAs metabolic process for the PIWIL2 slicing-triggered loading of PIWIL4 piRNAs. This is Putative ATP-dependent RNA helicase TDRD12 (TDRD12) from Homo sapiens (Human).